The chain runs to 143 residues: Large-conductance mechanosensitive channel (143 aa).

Transmembrane regions (helical) follow at residues 10–30 (FAVKGNVMDLAVGVIIGGAFS) and 89–109 (GSFITVAINFVILAFIIFLMV).

Belongs to the MscL family. In terms of assembly, homopentamer.

The protein localises to the cell inner membrane. Its function is as follows. Channel that opens in response to stretch forces in the membrane lipid bilayer. May participate in the regulation of osmotic pressure changes within the cell. The protein is Large-conductance mechanosensitive channel of Burkholderia ambifaria (strain ATCC BAA-244 / DSM 16087 / CCUG 44356 / LMG 19182 / AMMD) (Burkholderia cepacia (strain AMMD)).